A 211-amino-acid polypeptide reads, in one-letter code: AILGVAIFAAPSLADFHSHPPIHKPPVYTPPVHKPPIHKPPVYTPPVHKPPVYTPPVHKPPSEYKPPVEATNSVTEDHYPIHKPPVYKPPVQKPAPEHKPPVHKPPIHKPPVHNTPSVTDDHYPAHPIHKPQPIHRPPVHKPPTEHKPPVHEPATEHKPSPVYQPPKTEKPVPEHKPPHLPPIVVRPPPTHKPNPPYGHHPRHPPVENTGN.

The signal sequence occupies residues 1 to 14 (AILGVAIFAAPSLA). Pro residues-rich tracts occupy residues 25-59 (PPVY…PVHK) and 82-93 (HKPPVYKPPVQK). Residues 25 to 211 (PPVYTPPVHK…RHPPVENTGN (187 aa)) are disordered. Basic residues-rich tracts occupy residues 101 to 111 (PVHKPPIHKPP) and 127 to 139 (PIHK…RPPV). Composition is skewed to basic and acidic residues over residues 142–159 (PPTE…EHKP) and 167–177 (KTEKPVPEHKP). The span at 179–198 (HLPPIVVRPPPTHKPNPPYG) shows a compositional bias: pro residues.

It belongs to the plant proline-rich protein superfamily. ENOD12 family.

The protein resides in the secreted. Its subcellular location is the cell wall. The polypeptide is Proline-rich 33 kDa extensin-related protein (Daucus carota (Wild carrot)).